The chain runs to 201 residues: MADVEQPEAGPSEPQGREVTYCGVCSLPPEYCEYGGTVKKCQDWLQRNNQEMYDRIWSPEALQAATAALSVEAQQRAEKDAKKKAAKAEAAEAKHADKLKKSVVTVKRIERNKRKYVTSVSGLESFGLELKKVAKDFGKKFATGSSVTKVASGGEEIVVQGDVSDEIKEFIVEKYKDVPEDNIELVDDKKNKKKEAATAAG.

The region spanning 104–175 is the SUI1 domain; that stretch reads VTVKRIERNK…EIKEFIVEKY (72 aa).

Belongs to the DENR family. In terms of assembly, interacts with the 40S ribosomal subunit.

The protein localises to the cytoplasm. In Pyricularia oryzae (strain 70-15 / ATCC MYA-4617 / FGSC 8958) (Rice blast fungus), this protein is Translation machinery-associated protein 22 (TMA22).